We begin with the raw amino-acid sequence, 603 residues long: NADH-ubiquinone oxidoreductase chain 5 (603 aa).

Helical transmembrane passes span 4 to 24 (ISTLTLASLIILTLPITTTLL), 35 to 55 (ITKTAVTYAFVISLIPTLLFV), 84 to 104 (FFSLTFMPIALFITWSIMEFS), 121 to 141 (LLLFLITMLILVSANNLLQLF), 177 to 197 (IGDMGFIMMMAWFIIHLNSWE), 213 to 233 (LLGLLLASTGKSAQFGLHPWL), 241 to 261 (TPVSALLHSSTMVMAGVFTLI), 273 to 293 (VQTSTLCLGAITTLFTAICAL), 301 to 320 (IIALSTSSQLGLMMVTIGIN), 325 to 347 (AFTHMCTHAFFKAMLFLSSGSII), 366 to 386 (MPITSTAIIIGSLALTGMPFL), 413 to 433 (LIAVSMTASYSTRIIFFALLG), 457 to 477 (LILGSIFMGFFISMNTIPHTT), 480 to 500 (MTMPPHLKFMALAVTLLGFTV), and 583 to 603 (LMKLYFLSFLLSITLGLLIAL).

It belongs to the complex I subunit 5 family. In terms of assembly, core subunit of respiratory chain NADH dehydrogenase (Complex I) which is composed of 45 different subunits.

It localises to the mitochondrion inner membrane. It carries out the reaction a ubiquinone + NADH + 5 H(+)(in) = a ubiquinol + NAD(+) + 4 H(+)(out). Functionally, core subunit of the mitochondrial membrane respiratory chain NADH dehydrogenase (Complex I) which catalyzes electron transfer from NADH through the respiratory chain, using ubiquinone as an electron acceptor. Essential for the catalytic activity and assembly of complex I. This is NADH-ubiquinone oxidoreductase chain 5 (MT-ND5) from Mammuthus primigenius (Siberian woolly mammoth).